Reading from the N-terminus, the 380-residue chain is Queuine tRNA-ribosyltransferase (380 aa).

Aspartate 95 serves as the catalytic Proton acceptor. Substrate contacts are provided by residues aspartate 95–phenylalanine 99, aspartate 149, glutamine 192, and glycine 219. Residues glycine 250–alanine 256 form an RNA binding region. The active-site Nucleophile is aspartate 269. An RNA binding; important for wobble base 34 recognition region spans residues threonine 274 to arginine 278. Cysteine 307, cysteine 309, cysteine 312, and histidine 338 together coordinate Zn(2+).

This sequence belongs to the queuine tRNA-ribosyltransferase family. Homodimer. Within each dimer, one monomer is responsible for RNA recognition and catalysis, while the other monomer binds to the replacement base PreQ1. It depends on Zn(2+) as a cofactor.

It catalyses the reaction 7-aminomethyl-7-carbaguanine + guanosine(34) in tRNA = 7-aminomethyl-7-carbaguanosine(34) in tRNA + guanine. The protein operates within tRNA modification; tRNA-queuosine biosynthesis. Catalyzes the base-exchange of a guanine (G) residue with the queuine precursor 7-aminomethyl-7-deazaguanine (PreQ1) at position 34 (anticodon wobble position) in tRNAs with GU(N) anticodons (tRNA-Asp, -Asn, -His and -Tyr). Catalysis occurs through a double-displacement mechanism. The nucleophile active site attacks the C1' of nucleotide 34 to detach the guanine base from the RNA, forming a covalent enzyme-RNA intermediate. The proton acceptor active site deprotonates the incoming PreQ1, allowing a nucleophilic attack on the C1' of the ribose to form the product. After dissociation, two additional enzymatic reactions on the tRNA convert PreQ1 to queuine (Q), resulting in the hypermodified nucleoside queuosine (7-(((4,5-cis-dihydroxy-2-cyclopenten-1-yl)amino)methyl)-7-deazaguanosine). The protein is Queuine tRNA-ribosyltransferase of Pediococcus pentosaceus (strain ATCC 25745 / CCUG 21536 / LMG 10740 / 183-1w).